The primary structure comprises 457 residues: Equilibrative nucleoside transporter 1 (457 aa).

The Cytoplasmic segment spans residues Met1–Lys12. Residues Ala13–Trp29 traverse the membrane as a helical segment. The Extracellular portion of the chain corresponds to Asn30–Asn82. N-linked (GlcNAc...) asparagine glycans are attached at residues Asn44, Asn48, and Asn54. The chain crosses the membrane as a helical span at residues Val83–Ser107. Residues Gln108–Arg111 lie on the Cytoplasmic side of the membrane. Residues Ile112–Val130 traverse the membrane as a helical segment. At Lys131–Ser138 the chain is on the extracellular side. Residues Phe139–Leu157 form a helical membrane-spanning segment. Over Gln158–Ala174 the chain is Cytoplasmic. A helical membrane pass occupies residues Pro175–Ser199. Over Lys200–Phe206 the chain is Extracellular. A helical membrane pass occupies residues Gly207–Pro227. Residues Trp228–Val291 lie on the Cytoplasmic side of the membrane. A Phosphoserine modification is found at Ser254. Residues Glu255–Ser266 are compositionally biased toward basic and acidic residues. Residues Glu255–Pro275 form a disordered region. Ser273 bears the Phosphoserine mark. Residues Leu292 to Thr311 form a helical membrane-spanning segment. Over Ala312 to Pro323 the chain is Extracellular. A helical transmembrane segment spans residues Trp324–Trp343. Residues Leu344–Arg360 are Cytoplasmic-facing. Residues Trp361–Cys379 traverse the membrane as a helical segment. The Extracellular segment spans residues Asn380–Asp394. Residues Val395–Leu414 form a helical membrane-spanning segment. At Cys415–Gly432 the chain is on the cytoplasmic side. The chain crosses the membrane as a helical span at residues Asn433–Leu453. Over Arg454–Val457 the chain is Extracellular.

This sequence belongs to the SLC29A/ENT transporter (TC 2.A.57) family. In terms of assembly, identified in a complex with STOM. In terms of tissue distribution, expressed in jejunum, liver and lung. Expressed in testis at the blood-testis barrier (at protein level). Expressed in ventricular myocytes (at protein level). Expressed in kidney.

It is found in the basolateral cell membrane. It localises to the apical cell membrane. Its subcellular location is the cell membrane. The enzyme catalyses adenosine(in) = adenosine(out). The catalysed reaction is guanosine(in) = guanosine(out). It catalyses the reaction inosine(in) = inosine(out). It carries out the reaction uridine(out) = uridine(in). The enzyme catalyses thymidine(in) = thymidine(out). The catalysed reaction is cytidine(in) = cytidine(out). It catalyses the reaction adenine(out) = adenine(in). It carries out the reaction guanine(out) = guanine(in). The enzyme catalyses thymine(out) = thymine(in). The catalysed reaction is uracil(in) = uracil(out). It catalyses the reaction hypoxanthine(out) = hypoxanthine(in). With respect to regulation, transport activity is sensitive to low concentrations of the inhibitor nitrobenzylmercaptopurine riboside (NBMPR). Its function is as follows. Uniporter involved in the facilitative transport of nucleosides and nucleobases, and contributes to maintaining their cellular homeostasis. Functions as a Na(+)-independent transporter. Involved in the transport of nucleosides such as adenosine, thymidine and uridine. Also transports purine nucleobases (hypoxanthine, adenine, guanine) and pyrimidine nucleobases (thymine, uracil). Mediates basolateral nucleoside uptake into Sertoli cells, thereby regulating the transport of nucleosides in testis across the blood-testis barrier. Regulates inosine levels in brown adipocytes tissues (BAT) and extracellular inosine levels, which controls BAT-dependent energy expenditure. This chain is Equilibrative nucleoside transporter 1, found in Rattus norvegicus (Rat).